A 208-amino-acid polypeptide reads, in one-letter code: Frataxin, mitochondrial (208 aa).

The transit peptide at 1 to 40 (MWTFGRRAAAGLLPRTASRASAWVRNPRGRERIGTCGRRG) directs the protein to the mitochondrion.

This sequence belongs to the frataxin family. As to quaternary structure, component of the mitochondrial core iron-sulfur cluster (ISC) complex composed of NFS1, LYRM4, NDUFAB1, ISCU, FXN, and FDX2; this complex is a heterohexamer containing two copies of each monomer. Homodimer. Monomer (probable predominant form). Oligomer. Monomers and polymeric aggregates of &gt;1 MDa have been isolated from mitochondria. A small fraction of heterologous overexpressed recombinant frataxin forms high-molecular weight aggregates that incorporate iron. Interacts with LYRM4. Interacts (via ferrous form) with ISCU; the interaction is possible when both are bound to the dimeric form of the cysteine desulfurase complex (NFS1:LYRM4) and the interaction enhances FXN interaction to the dimeric form of the cysteine desulfurase complex (NFS1:LYRM4). Interacts with FECH; one iron-bound FXN monomer seems to interact with a FECH homodimer. Interacts with SDHA and SDHB. Interacts with ACO2; the interaction is dependent on citrate. Interacts with HSPA9. Interacts with ACO1. Interacts with ISCU (cytoplasmic form). In terms of processing, processed in two steps by mitochondrial processing peptidase (MPP). MPP first cleaves the precursor to intermediate form and subsequently converts the intermediate to yield frataxin mature form (frataxin(81-210)) which is the predominant form. The additional forms, frataxin(56-210) and frataxin(78-210), seem to be produced when the normal maturation process is impaired; their physiological relevance is unsure.

Its subcellular location is the mitochondrion. The protein localises to the cytoplasm. The protein resides in the cytosol. It catalyses the reaction 4 Fe(2+) + O2 + 4 H(+) = 4 Fe(3+) + 2 H2O. Its function is as follows. Functions as an activator of persulfide transfer to the scaffoding protein ISCU as component of the core iron-sulfur cluster (ISC) assembly complex and participates to the [2Fe-2S] cluster assembly. Accelerates sulfur transfer from NFS1 persulfide intermediate to ISCU and to small thiols such as L-cysteine and glutathione leading to persulfuration of these thiols and ultimately sulfide release. Binds ferrous ion and is released from FXN upon the addition of both L-cysteine and reduced FDX2 during [2Fe-2S] cluster assembly. The core iron-sulfur cluster (ISC) assembly complex is involved in the de novo synthesis of a [2Fe-2S] cluster, the first step of the mitochondrial iron-sulfur protein biogenesis. This process is initiated by the cysteine desulfurase complex (NFS1:LYRM4:NDUFAB1) that produces persulfide which is delivered on the scaffold protein ISCU in a FXN-dependent manner. Then this complex is stabilized by FDX2 which provides reducing equivalents to accomplish the [2Fe-2S] cluster assembly. Finally, the [2Fe-2S] cluster is transferred from ISCU to chaperone proteins, including HSCB, HSPA9 and GLRX5. May play a role in the protection against iron-catalyzed oxidative stress through its ability to catalyze the oxidation of Fe(2+) to Fe(3+); the oligomeric form but not the monomeric form has in vitro ferroxidase activity. May be able to store large amounts of iron in the form of a ferrihydrite mineral by oligomerization; however, the physiological relevance is unsure as reports are conflicting and the function has only been shown using heterologous overexpression systems. May function as an iron chaperone protein that protects the aconitase [4Fe-4S]2+ cluster from disassembly and promotes enzyme reactivation. May play a role as a high affinity iron binding partner for FECH that is capable of both delivering iron to ferrochelatase and mediating the terminal step in mitochondrial heme biosynthesis. Functionally, modulates the RNA-binding activity of ACO1. May be involved in the cytoplasmic iron-sulfur protein biogenesis. May contribute to oxidative stress resistance and overall cell survival. The sequence is that of Frataxin, mitochondrial from Rattus norvegicus (Rat).